Reading from the N-terminus, the 174-residue chain is MSKKFWSNIFLALGVFLAFAGVATISVSADSSATIESNTSSKIIDGATYEENIRGVIPITLTQYLHKAQTGEKFIVFVGFKECVHCRKFSPVMKQYLQQSQHPIYYLDYGNNGSFSMASQKQITDFYSTFATPMSFMGTPTVALLDNGKVVSMTAGDDTTLSDLQQITADYNNQ.

Functionally, probably involved in pediocin PA-1 biosynthesis. In Pediococcus acidilactici, this protein is Pediocin PA-1 biosynthesis protein PedC (pedC).